Reading from the N-terminus, the 117-residue chain is Probable prefoldin subunit 1 (117 aa).

Belongs to the prefoldin subunit beta family. As to quaternary structure, heterohexamer of two PFD-alpha type and four PFD-beta type subunits.

It localises to the cytoplasm. Binds specifically to cytosolic chaperonin (c-CPN) and transfers target proteins to it. Binds to nascent polypeptide chain and promotes folding in an environment in which there are many competing pathways for nonnative proteins. Has a role in gonadogenesis. This is Probable prefoldin subunit 1 (pfd-1) from Caenorhabditis briggsae.